The primary structure comprises 101 residues: Small ribosomal subunit protein bS18c (101 aa).

The span at 1–19 (MDKSKRPFRKSKRSFRRRL) shows a compositional bias: basic residues. The interval 1-23 (MDKSKRPFRKSKRSFRRRLPPIG) is disordered.

This sequence belongs to the bacterial ribosomal protein bS18 family. In terms of assembly, part of the 30S ribosomal subunit.

It localises to the plastid. Its subcellular location is the chloroplast. This is Small ribosomal subunit protein bS18c from Ceratophyllum demersum (Rigid hornwort).